Here is a 110-residue protein sequence, read N- to C-terminus: Antimicrobial peptide microplusin (110 aa).

Residues 1–20 (MKAIFVSALLVVALVASTSA) form the signal peptide. 3 disulfides stabilise this stretch: cysteine 26/cysteine 72, cysteine 39/cysteine 100, and cysteine 61/cysteine 66.

As to expression, expressed in the hemocytes, fat body and ovaries.

The protein resides in the secreted. Its function is as follows. Has bacteriostatic activity against the Gram-positive bacterium M.luteus, but not against Gram-negative bacterium E.coli SBS363. Has fungistatic activity against C.neoformans, but not C.albicans. Binds and sequesters copper and iron ions. Copper-chelating is crucial for antimicrobial activity against M.luteus. The sequence is that of Antimicrobial peptide microplusin from Rhipicephalus microplus (Cattle tick).